We begin with the raw amino-acid sequence, 567 residues long: ATP-dependent RNA helicase HAS1 (567 aa).

Residues Met1–Gly109 are disordered. Over residues Glu30–Asp40 the composition is skewed to acidic residues. Positions Glu35–Tyr88 form a coiled coil. Residues Asp103 to Ala131 carry the Q motif motif. In terms of domain architecture, Helicase ATP-binding spans Ile134–Tyr310. Ala147–Thr154 contacts ATP. The short motif at Asp257–Asp260 is the DEAD box element. One can recognise a Helicase C-terminal domain in the interval Gly324–Val484.

Belongs to the DEAD box helicase family. DDX18/HAS1 subfamily. Associates in the nucleolus with the 60S and pre-60S ribosomal subunits.

It localises to the nucleus. The protein resides in the nucleolus. The catalysed reaction is ATP + H2O = ADP + phosphate + H(+). Functionally, ATP-dependent RNA helicase involved in 40S ribosomal subunit biogenesis. Required for the processing and cleavage of 35S pre-rRNA at sites A0, A1, and A2, leading to mature 18S rRNA. This chain is ATP-dependent RNA helicase HAS1 (HAS1), found in Scheffersomyces stipitis (strain ATCC 58785 / CBS 6054 / NBRC 10063 / NRRL Y-11545) (Yeast).